The following is a 525-amino-acid chain: Bifunctional purine biosynthesis protein PurH (525 aa).

Residues 1–149 (MSDPVIKRAL…KNNESVTVVT (149 aa)) enclose the MGS-like domain.

This sequence belongs to the PurH family.

The catalysed reaction is (6R)-10-formyltetrahydrofolate + 5-amino-1-(5-phospho-beta-D-ribosyl)imidazole-4-carboxamide = 5-formamido-1-(5-phospho-D-ribosyl)imidazole-4-carboxamide + (6S)-5,6,7,8-tetrahydrofolate. It carries out the reaction IMP + H2O = 5-formamido-1-(5-phospho-D-ribosyl)imidazole-4-carboxamide. It participates in purine metabolism; IMP biosynthesis via de novo pathway; 5-formamido-1-(5-phospho-D-ribosyl)imidazole-4-carboxamide from 5-amino-1-(5-phospho-D-ribosyl)imidazole-4-carboxamide (10-formyl THF route): step 1/1. It functions in the pathway purine metabolism; IMP biosynthesis via de novo pathway; IMP from 5-formamido-1-(5-phospho-D-ribosyl)imidazole-4-carboxamide: step 1/1. The protein is Bifunctional purine biosynthesis protein PurH of Prosthecochloris aestuarii (strain DSM 271 / SK 413).